A 97-amino-acid polypeptide reads, in one-letter code: Plasmid stability protein StbC (97 aa).

Its function is as follows. Involved in plasmid stability. The protein is Plasmid stability protein StbC (stbC) of Pseudomonas syringae pv. tomato (strain ATCC BAA-871 / DC3000).